A 497-amino-acid polypeptide reads, in one-letter code: Inactive metallocarboxypeptidase ecm14 (497 aa).

The signal sequence occupies residues 1 to 28 (MAYNKSLKSLVFILLASQIVFVLFLCYG). The propeptide occupies 29–148 (KSSRELGVKW…TLFESIVPDT (120 aa)). The region spanning 182-492 (SYQNLESINS…AMILYYGEFI (311 aa)) is the Peptidase M14 domain. Positions 248 and 251 each coordinate Zn(2+). Residues 248–251 (HARE) and 323–324 (DA) contribute to the substrate site. Cys317 and Cys337 are joined by a disulfide. His377 contacts Zn(2+). 378–379 (SY) serves as a coordination point for substrate.

The protein belongs to the peptidase M14 family. It depends on Zn(2+) as a cofactor.

The protein resides in the endoplasmic reticulum. Its subcellular location is the secreted. Functionally, inactive carboxypeptidase that may play a role in cell wall organization and biogenesis. The chain is Inactive metallocarboxypeptidase ecm14 from Schizosaccharomyces pombe (strain 972 / ATCC 24843) (Fission yeast).